The following is a 528-amino-acid chain: Na(+)/H(+) antiporter NhaB (528 aa).

Transmembrane regions (helical) follow at residues 10 to 30 (IGNFLGNSPKWYKIAILSFLI), 63 to 83 (YPLQPGGLLAIEAVAIGMTSA), 96 to 116 (VLLLLVFMVAGIYFMKQLLLF), 131 to 165 (VSLMFCLTSAFLSAFLDALTVIAVIIAVAVGFYAI), 204 to 224 (LLMHAGVGTALGGVCTMVGEP), 240 to 260 (FVIRMSPVTVPVLIAGILTCL), 305 to 325 (VLVGVWLIAGLALHLASVGLV), 359 to 379 (LAVFFAVVAVIIDQHLFAPVI), 391 to 411 (LVIFYIANGLLSMVSDNVFVG), 449 to 469 (ATPNGQAAFLFLLTSALAPLI), and 476 to 496 (MVWMALPYTIVLSVVGVLAIE).

This sequence belongs to the NhaB Na(+)/H(+) (TC 2.A.34) antiporter family.

The protein resides in the cell inner membrane. The enzyme catalyses 2 Na(+)(in) + 3 H(+)(out) = 2 Na(+)(out) + 3 H(+)(in). Na(+)/H(+) antiporter that extrudes sodium in exchange for external protons. This chain is Na(+)/H(+) antiporter NhaB, found in Shewanella putrefaciens (strain CN-32 / ATCC BAA-453).